The sequence spans 87 residues: Cell division protein FtsL (87 aa).

The Cytoplasmic portion of the chain corresponds to 1–3; the sequence is MSR. The helical transmembrane segment at 4–23 threads the bilayer; the sequence is LLLIVLLACSIASAIGVVYM. Residues 24 to 87 lie on the Periplasmic side of the membrane; that stretch reads RHMHRKLFVQ…ETSDIVVIRP (64 aa).

Belongs to the FtsL family. In terms of assembly, part of a complex composed of FtsB, FtsL and FtsQ.

Its subcellular location is the cell inner membrane. Essential cell division protein. May link together the upstream cell division proteins, which are predominantly cytoplasmic, with the downstream cell division proteins, which are predominantly periplasmic. This Xanthomonas campestris pv. campestris (strain ATCC 33913 / DSM 3586 / NCPPB 528 / LMG 568 / P 25) protein is Cell division protein FtsL.